Consider the following 388-residue polypeptide: Leucine aminopeptidase 1 (388 aa).

An N-terminal signal peptide occupies residues 1–19; the sequence is MRVLAAIALGATGLRGALA. A propeptide spanning residues 20–88 is cleaved from the precursor; that stretch reads AVVPQEVLGT…YPTLNSASYV (69 aa). 2 N-linked (GlcNAc...) asparagine glycosylation sites follow: Asn-106 and Asn-180. Residues His-188 and Asp-207 each coordinate Zn(2+). Asn-232 is a glycosylation site (N-linked (GlcNAc...) asparagine). Residues Glu-246 and Asp-273 each contribute to the Zn(2+) site. A disulfide bridge links Cys-322 with Cys-326. His-355 is a Zn(2+) binding site.

The protein belongs to the peptidase M28 family. M28E subfamily. Monomer. Zn(2+) serves as cofactor.

It is found in the secreted. Its function is as follows. Extracellular aminopeptidase that allows assimilation of proteinaceous substrates. The sequence is that of Leucine aminopeptidase 1 (lap1) from Aspergillus clavatus (strain ATCC 1007 / CBS 513.65 / DSM 816 / NCTC 3887 / NRRL 1 / QM 1276 / 107).